A 394-amino-acid chain; its full sequence is Argininosuccinate synthase (394 aa).

Ala-8–Ser-16 is a binding site for ATP. L-citrulline is bound by residues Tyr-86 and Ser-91. Gly-116 contacts ATP. The L-aspartate site is built by Thr-118, Asn-122, and Asp-123. Asn-122 serves as a coordination point for L-citrulline. The L-citrulline site is built by Arg-126, Ser-172, Ser-181, Glu-256, and Tyr-268.

It belongs to the argininosuccinate synthase family. Type 1 subfamily. In terms of assembly, homotetramer.

It is found in the cytoplasm. The catalysed reaction is L-citrulline + L-aspartate + ATP = 2-(N(omega)-L-arginino)succinate + AMP + diphosphate + H(+). Its pathway is amino-acid biosynthesis; L-arginine biosynthesis; L-arginine from L-ornithine and carbamoyl phosphate: step 2/3. The protein is Argininosuccinate synthase of Methanococcoides burtonii (strain DSM 6242 / NBRC 107633 / OCM 468 / ACE-M).